The primary structure comprises 659 residues: Mitochondrial Rho GTPase 1 (659 aa).

The Cytoplasmic portion of the chain corresponds to 1 to 631; the sequence is MTKTRIRIVV…LTNDIDYRQT (631 aa). Residues 3 to 183 enclose the Miro 1 domain; the sequence is KTRIRIVVCG…FYLCQRTITN (181 aa). Residues 12–19, 61–63, and 115–118 each bind GTP; these read GDSGVGKT, DTG, and NKCD. EF-hand domains are found at residues 199–234 and 328–363; these read LGVL…CFSK and LGYR…TPGL. Positions 212, 214, 216, 223, 341, 343, 345, and 352 each coordinate Ca(2+). Positions 444 to 609 constitute a Miro 2 domain; it reads RKVLNCYMLG…FIKLTEVALE (166 aa). Residues 453-460, 489-493, and 558-561 contribute to the GTP site; these read GKGNSGKS, ELKGG, and LKAD. The chain crosses the membrane as a helical; Anchor for type IV membrane protein span at residues 632–652; the sequence is IVAISSVVGFASLFTFTALKI. Topologically, residues 653–659 are mitochondrial intermembrane; the sequence is YSSFKNT.

This sequence belongs to the mitochondrial Rho GTPase family.

It is found in the mitochondrion outer membrane. Functionally, mitochondrial GTPase involved in mitochondrial trafficking. Probably involved in control of anterograde transport of mitochondria and their subcellular distribution. The polypeptide is Mitochondrial Rho GTPase 1 (GEM1) (Kluyveromyces lactis (strain ATCC 8585 / CBS 2359 / DSM 70799 / NBRC 1267 / NRRL Y-1140 / WM37) (Yeast)).